The sequence spans 281 residues: Elongation factor 1-delta (281 aa).

Ala2 is modified (N-acetylalanine). Lys17 carries the N6-acetyllysine modification. Phosphoserine is present on residues Ser37, Ser44, Ser60, Ser86, and Ser106. Residues 80-115 (LIVRIASLEVENQNLRGVVQDLQQAISKLEVRLSTL) form a leucine-zipper region. Lys107 bears the N6-acetyllysine mark. Residues 115 to 132 (LEKSSPTHRATAPQTQHV) show a composition bias toward polar residues. Positions 115-172 (LEKSSPTHRATAPQTQHVSPMRQVEPPAKKGATPAEDDEDNDIDLFGSDEEEEDKEAA) are disordered. Lys117 is modified (N6-acetyllysine; alternate). The residue at position 117 (Lys117) is an N6-succinyllysine; alternate. Phosphoserine is present on Ser119. Thr129 is subject to Phosphothreonine. Ser133 is modified (phosphoserine). Thr147 is subject to Phosphothreonine. A compositionally biased stretch (acidic residues) spans 149-169 (AEDDEDNDIDLFGSDEEEEDK). Phosphoserine; by CK2 is present on Ser162. A catalytic (GEF) region spans residues 173-281 (RLREERLRQY…SVDIAAFNKI (109 aa)).

Belongs to the EF-1-beta/EF-1-delta family. In terms of assembly, EF-1 is composed of 4 subunits: alpha, beta, delta isoform 1, and gamma. Isoform 2 interacts with HSF1 and NFE2L2.

It localises to the nucleus. Functionally, EF-1-beta and EF-1-delta stimulate the exchange of GDP bound to EF-1-alpha to GTP, regenerating EF-1-alpha for another round of transfer of aminoacyl-tRNAs to the ribosome. In terms of biological role, regulates induction of heat-shock-responsive genes through association with heat shock transcription factors and direct DNA-binding at heat shock promoter elements (HSE). This is Elongation factor 1-delta (Eef1d) from Rattus norvegicus (Rat).